The sequence spans 311 residues: Ribosomal protein L11 methyltransferase (311 aa).

S-adenosyl-L-methionine is bound by residues T162, G183, D205, and N248.

The protein belongs to the methyltransferase superfamily. PrmA family.

The protein resides in the cytoplasm. The catalysed reaction is L-lysyl-[protein] + 3 S-adenosyl-L-methionine = N(6),N(6),N(6)-trimethyl-L-lysyl-[protein] + 3 S-adenosyl-L-homocysteine + 3 H(+). In terms of biological role, methylates ribosomal protein L11. This Bacillus licheniformis (strain ATCC 14580 / DSM 13 / JCM 2505 / CCUG 7422 / NBRC 12200 / NCIMB 9375 / NCTC 10341 / NRRL NRS-1264 / Gibson 46) protein is Ribosomal protein L11 methyltransferase.